Here is a 398-residue protein sequence, read N- to C-terminus: Polyferredoxin protein VhuB (398 aa).

11 4Fe-4S ferredoxin-type domains span residues 2–31 (AGIKIQEDACLVCNACSKACPTEAIEIAPF), 25–53 (AIEIAPFKTCTLCFSCASACPTGALVENN), 54–83 (GKLIYNSSKCIKCGNCATACPTGIKKVDDR), 82–111 (DRFPYSKGHCVLCEKCVDACPIDIISIPGK), 123–152 (QEPIKVTEACVGCSECVPVCPVDAISIEDE), 152–181 (ELAVIDTEKCIYCSVCAQTCPWNAIYVAGK), 191–219 (KSFTVTEECIGCEKCVEVCPGDMITYNRE), 220–249 (DLIVKLPEACPACHLCEQNCPVDAISLEVE), 259–291 (EGLVWYEDKCNYCGPCAIKCPLCPTNAINMINQ), 300–331 (TKTDKDPEFRMCIRCGACVMKCPTGALKMGKI), and 339–368 (NRIEFSPALCNECGECVDVCPQDTLKLTGD). Positions 11, 14, 17, 21, 34, 37, 40, 44, 63, 66, 69, 73, 91, 94, 97, 101, 132, 135, 138, 142, 161, 164, 167, 171, 199, 202, 205, 209, 229, 232, 235, 239, 268, 271, 274, 278, 311, 314, 317, 321, 348, 351, 354, 358, 377, 380, 383, and 387 each coordinate [4Fe-4S] cluster.

The cofactor is [4Fe-4S] cluster.

In Methanococcus voltae, this protein is Polyferredoxin protein VhuB (vhuB).